The chain runs to 430 residues: Adenosylhomocysteinase (430 aa).

Positions 56, 131, and 156 each coordinate substrate. T157–T159 contacts NAD(+). Substrate contacts are provided by K186 and D190. Residues N191, G220 to G225, E243, N278, I299 to H301, and N344 contribute to the NAD(+) site.

It belongs to the adenosylhomocysteinase family. Requires NAD(+) as cofactor.

The protein localises to the cytoplasm. It catalyses the reaction S-adenosyl-L-homocysteine + H2O = L-homocysteine + adenosine. It participates in amino-acid biosynthesis; L-homocysteine biosynthesis; L-homocysteine from S-adenosyl-L-homocysteine: step 1/1. Functionally, may play a key role in the regulation of the intracellular concentration of adenosylhomocysteine. This Halorhodospira halophila (strain DSM 244 / SL1) (Ectothiorhodospira halophila (strain DSM 244 / SL1)) protein is Adenosylhomocysteinase.